The chain runs to 454 residues: Probable mitochondrial saccharopine dehydrogenase-like oxidoreductase At5g39410 (454 aa).

Methionine 1 is subject to N-acetylmethionine. The segment at 215 to 234 (RRSRPRRPRPTICGPPAKGP) is disordered.

This sequence belongs to the saccharopine dehydrogenase family.

It is found in the mitochondrion membrane. This chain is Probable mitochondrial saccharopine dehydrogenase-like oxidoreductase At5g39410, found in Arabidopsis thaliana (Mouse-ear cress).